Here is a 29-residue protein sequence, read N- to C-terminus: Cytochrome c oxidase subunit 7A1, mitochondrial (29 aa).

Residues 1 to 13 (LENRVAEKQKLFQ) are compositionally biased toward basic and acidic residues. The tract at residues 1 to 29 (LENRVAEKQKLFQEDNGLPVHLKGGATDN) is disordered.

Belongs to the cytochrome c oxidase VIIa family. In terms of assembly, component of the complex IV (CIV, cytochrome c oxidase), a multisubunit enzyme composed of 14 subunits. The complex is composed of a catalytic core of 3 subunits MT-CO1, MT-CO2 and MT-CO3, encoded in the mitochondrial DNA, and 11 supernumerary subunits COX4I1 (or COX4I2), COX5A, COX5B, COX6A2 (or COX6A1), COX6B1 (or COX6B2), COX6C, COX7A1 (or COX7A2), COX7B, COX7C, COX8B and NDUFA4, which are encoded in the nuclear genome. The complex exists as a monomer or a dimer and forms supercomplexes (SCs) in the inner mitochondrial membrane with NADH-ubiquinone oxidoreductase (complex I, CI) and ubiquinol-cytochrome c oxidoreductase (cytochrome b-c1 complex, complex III, CIII), resulting in different assemblies (supercomplex SCI(1)III(2)IV(1) and megacomplex MCI(2)III(2)IV(2)).

It localises to the mitochondrion inner membrane. It functions in the pathway energy metabolism; oxidative phosphorylation. Functionally, component of the mitochondrial respiratory complex IV (CIV, also named cytochrome c oxidase complex), the last enzyme in the mitochondrial electron transport chain which drives oxidative phosphorylation. The CIV complex is the component of the respiratory chain that catalyzes the reduction of oxygen to water. Acts as an assembly factor that specifically drives the homodimerization of CIV complexes, mediating the formation of mitochondrial respiratory supercomplexes (respirasomes) containing two CIV: supercomplxes with two molecules of CIV show improved activity. Despite being highly expressed in brown adipose tissue, not required for thermogenesis. This is Cytochrome c oxidase subunit 7A1, mitochondrial (COX7A1) from Ovis aries (Sheep).